The sequence spans 603 residues: Threonine--tRNA ligase (603 aa).

The catalytic stretch occupies residues 209-500 (DHRKLGNEMK…LIEHCAGELP (292 aa)). Cys301, His352, and His477 together coordinate Zn(2+).

The protein belongs to the class-II aminoacyl-tRNA synthetase family. In terms of assembly, homodimer. It depends on Zn(2+) as a cofactor.

Its subcellular location is the cytoplasm. The catalysed reaction is tRNA(Thr) + L-threonine + ATP = L-threonyl-tRNA(Thr) + AMP + diphosphate + H(+). Its function is as follows. Catalyzes the attachment of threonine to tRNA(Thr) in a two-step reaction: L-threonine is first activated by ATP to form Thr-AMP and then transferred to the acceptor end of tRNA(Thr). Also edits incorrectly charged L-seryl-tRNA(Thr). This is Threonine--tRNA ligase from Campylobacter lari (strain RM2100 / D67 / ATCC BAA-1060).